Reading from the N-terminus, the 120-residue chain is Seripauperin-20 (120 aa).

A helical membrane pass occupies residues 7–25; the sequence is IAAGVAAIAAGASATTTLA.

The protein belongs to the SRP1/TIP1 family. Seripauperin subfamily.

The protein resides in the membrane. The protein is Seripauperin-20 (PAU20) of Saccharomyces cerevisiae (strain ATCC 204508 / S288c) (Baker's yeast).